Here is a 70-residue protein sequence, read N- to C-terminus: Dermaseptin-H3 (70 aa).

Residues 1–22 (MAFLKKSLFLVLFLGMVSLSIC) form the signal peptide. A propeptide spanning residues 23–43 (EEEKRENEDEELQEDDEQSEM) is cleaved from the precursor. Residues 25–44 (EKRENEDEELQEDDEQSEMK) form a disordered region. Residues 30–40 (EDEELQEDDEQ) show a composition bias toward acidic residues. L70 bears the Leucine amide mark.

In terms of tissue distribution, expressed by the skin glands.

It localises to the secreted. Its function is as follows. Has antibacterial activity against the Gram-negative bacteria E.coli and P.aeruginosa, and the Gram-positive bacteria S.aureus and M.luteus. Has antiprotozoal activity against L.amazonensis. No hemolytic activity. The chain is Dermaseptin-H3 from Pithecopus hypochondrialis (Orange-legged leaf frog).